A 526-amino-acid polypeptide reads, in one-letter code: Peptide chain release factor 3 (526 aa).

Residues 8 to 277 (NKRRTFAIIS…GLTEWAPKPQ (270 aa)) enclose the tr-type G domain. GTP contacts are provided by residues 17–24 (SHPDAGKT), 85–89 (DTPGH), and 139–142 (NKLD).

This sequence belongs to the TRAFAC class translation factor GTPase superfamily. Classic translation factor GTPase family. PrfC subfamily.

It localises to the cytoplasm. Functionally, increases the formation of ribosomal termination complexes and stimulates activities of RF-1 and RF-2. It binds guanine nucleotides and has strong preference for UGA stop codons. It may interact directly with the ribosome. The stimulation of RF-1 and RF-2 is significantly reduced by GTP and GDP, but not by GMP. This Actinobacillus pleuropneumoniae serotype 5b (strain L20) protein is Peptide chain release factor 3.